Reading from the N-terminus, the 428-residue chain is Adenylosuccinate synthetase (428 aa).

GTP contacts are provided by residues 12-18 and 40-42; these read GDEGKGK and GHT. D13 functions as the Proton acceptor in the catalytic mechanism. Mg(2+) is bound by residues D13 and G40. Residues 13–16, 38–41, T129, R143, Q224, T239, and R303 each bind IMP; these read DEGK and NAGH. H41 serves as the catalytic Proton donor. 299–305 lines the substrate pocket; that stretch reads VTTGRIR. Residues R305, 331 to 333, and 410 to 412 contribute to the GTP site; these read KVD and AYG.

Belongs to the adenylosuccinate synthetase family. As to quaternary structure, homodimer. Mg(2+) is required as a cofactor.

Its subcellular location is the cytoplasm. The catalysed reaction is IMP + L-aspartate + GTP = N(6)-(1,2-dicarboxyethyl)-AMP + GDP + phosphate + 2 H(+). The protein operates within purine metabolism; AMP biosynthesis via de novo pathway; AMP from IMP: step 1/2. In terms of biological role, plays an important role in the de novo pathway of purine nucleotide biosynthesis. Catalyzes the first committed step in the biosynthesis of AMP from IMP. This is Adenylosuccinate synthetase from Francisella tularensis subsp. tularensis (strain FSC 198).